Here is a 259-residue protein sequence, read N- to C-terminus: MEPESIGDVGNHAQDDSASIVSGPRRRSTSKTSSAKNIRNSSNISPASMIFRNLLILEDDLRRQAHEQKILKWQFTLFLASMAGVGAFTFYELYFTSDYVKGLHRVILQFTLSFISITVVLFHISGQYRRTIVIPRRFFTSTNKGIRQFNVKLVKVQSTWDEKYTDSVRFVSRTIAYCNIYCLKKFLWLKDDNAIVKFWKSVTIQSQPRIGAVDVKLVLNPRAFSAEIREGWEIYRDEFWAREGARRRKQAHELRPKSE.

Residues 1–40 (MEPESIGDVGNHAQDDSASIVSGPRRRSTSKTSSAKNIRN) form a disordered region. The Cytoplasmic segment spans residues 1 to 72 (MEPESIGDVG…RQAHEQKILK (72 aa)). The chain crosses the membrane as a helical span at residues 73-93 (WQFTLFLASMAGVGAFTFYEL). Over 94–106 (YFTSDYVKGLHRV) the chain is Extracellular. Residues 107 to 127 (ILQFTLSFISITVVLFHISGQ) traverse the membrane as a helical segment. The Cytoplasmic portion of the chain corresponds to 128-259 (YRRTIVIPRR…QAHELRPKSE (132 aa)).

Component of the NEM1-SPO7 complex.

It is found in the endoplasmic reticulum membrane. The protein localises to the nucleus membrane. Its function is as follows. Regulatory component of the NEM1-SPO7 complex which acts as a phosphatase and dephosphorylates the phosphatidic acid phosphohydrolase PAH1. Essential for the formation of a spherical nucleus and meiotic division. The NEM1-SPOo7 protein phosphatase is required for efficient mitophagy under prolonged respiration, as well as for reticulophagy and pexophagy. This chain is Sporulation-specific protein SPO7 (SPO7), found in Saccharomyces cerevisiae (strain ATCC 204508 / S288c) (Baker's yeast).